The following is a 556-amino-acid chain: Potassium-transporting ATPase potassium-binding subunit (556 aa).

10 consecutive transmembrane segments (helical) span residues 6–26 (AGILFALSLALALAAVHVPLG), 65–85 (SVLAFSAVSILFLFGLQLLQG), 133–153 (GLSVQNFVSAAVGMAVAMAFV), 176–196 (LRILLPLSIIGAIILVSGGVI), 249–269 (PTTWTNWVEIFLLSCIAFSLP), 283–303 (AAILAVMAVIATLSLSLMMLF), 378–398 (GLYSMLVLAVITVFVAGLMVG), 419–439 (YFLVTPLIVLIGTAVAMALPG), 483–503 (ALGLAMVFGRFLPIILVLALA), and 526–546 (FVGMVTGVTLILVALTFLPVL).

The protein belongs to the KdpA family. The system is composed of three essential subunits: KdpA, KdpB and KdpC.

It is found in the cell membrane. In terms of biological role, part of the high-affinity ATP-driven potassium transport (or Kdp) system, which catalyzes the hydrolysis of ATP coupled with the electrogenic transport of potassium into the cytoplasm. This subunit binds the extracellular potassium ions and delivers the ions to the membrane domain of KdpB through an intramembrane tunnel. The sequence is that of Potassium-transporting ATPase potassium-binding subunit from Mycobacterium sp. (strain KMS).